Consider the following 365-residue polypeptide: Cobalt-precorrin-5B C(1)-methyltransferase (365 aa).

Belongs to the CbiD family.

It carries out the reaction Co-precorrin-5B + S-adenosyl-L-methionine = Co-precorrin-6A + S-adenosyl-L-homocysteine. It participates in cofactor biosynthesis; adenosylcobalamin biosynthesis; cob(II)yrinate a,c-diamide from sirohydrochlorin (anaerobic route): step 6/10. Catalyzes the methylation of C-1 in cobalt-precorrin-5B to form cobalt-precorrin-6A. In Moorella thermoacetica (strain ATCC 39073 / JCM 9320), this protein is Cobalt-precorrin-5B C(1)-methyltransferase.